A 256-amino-acid chain; its full sequence is MLAKRIIPCLDVTNGRVVKGVNFVELRDAGDPVEIARRYDEQGADEITFLDITATSDGRDLMLHIIEDVASQVFIPLTVGGGVRTVEDVRRLLNAGADKISVNSSAIANPQLVSDATARYGSQCIVVAIDAKRSSAPGEAPRWEVFTHGGRKATGLDAVQWAREMATRGAGEILLTSMDRDGTKSGFDLELTRAVSDAVPVPVIASGGVGGLQDLADGITRGRADAVLAASIFHYGQHTVGEAKAFMAREGIPVRI.

Residues Asp-11 and Asp-130 contribute to the active site.

This sequence belongs to the HisA/HisF family. Heterodimer of HisH and HisF.

It is found in the cytoplasm. The catalysed reaction is 5-[(5-phospho-1-deoxy-D-ribulos-1-ylimino)methylamino]-1-(5-phospho-beta-D-ribosyl)imidazole-4-carboxamide + L-glutamine = D-erythro-1-(imidazol-4-yl)glycerol 3-phosphate + 5-amino-1-(5-phospho-beta-D-ribosyl)imidazole-4-carboxamide + L-glutamate + H(+). Its pathway is amino-acid biosynthesis; L-histidine biosynthesis; L-histidine from 5-phospho-alpha-D-ribose 1-diphosphate: step 5/9. Functionally, IGPS catalyzes the conversion of PRFAR and glutamine to IGP, AICAR and glutamate. The HisF subunit catalyzes the cyclization activity that produces IGP and AICAR from PRFAR using the ammonia provided by the HisH subunit. This Cupriavidus taiwanensis (strain DSM 17343 / BCRC 17206 / CCUG 44338 / CIP 107171 / LMG 19424 / R1) (Ralstonia taiwanensis (strain LMG 19424)) protein is Imidazole glycerol phosphate synthase subunit HisF.